The sequence spans 263 residues: MKTVTLSRLNAFKHAQEPFSCLTAYDASFAQHADAAGIDVLLVGDSLGMVLQGHASTLPVTLDDILYHTRCVARGKQRSLLMVDLPFMSNADTGQLLRDAGALMRAGAELVKIEGAGWMHEGVRELTRRGVPVCAHLGLTPQSVHQFGGYKVQGREQDDAQRIIDDARLLVEAGASVILLECVPAALGRAVRDAVDVPVIGIGAGPEVDGQILVMHDVIGVTHGRPPRFAKNFLAGRDSIQAAFEAYRDAVKTRQFPAEEHCF.

2 residues coordinate Mg(2+): D45 and D84. Residues 45 to 46, D84, and K112 contribute to the 3-methyl-2-oxobutanoate site; that span reads DS. Residue E114 coordinates Mg(2+). E181 functions as the Proton acceptor in the catalytic mechanism.

The protein belongs to the PanB family. As to quaternary structure, homodecamer; pentamer of dimers. Requires Mg(2+) as cofactor.

Its subcellular location is the cytoplasm. It carries out the reaction 3-methyl-2-oxobutanoate + (6R)-5,10-methylene-5,6,7,8-tetrahydrofolate + H2O = 2-dehydropantoate + (6S)-5,6,7,8-tetrahydrofolate. It functions in the pathway cofactor biosynthesis; (R)-pantothenate biosynthesis; (R)-pantoate from 3-methyl-2-oxobutanoate: step 1/2. Functionally, catalyzes the reversible reaction in which hydroxymethyl group from 5,10-methylenetetrahydrofolate is transferred onto alpha-ketoisovalerate to form ketopantoate. The polypeptide is 3-methyl-2-oxobutanoate hydroxymethyltransferase (Chromohalobacter salexigens (strain ATCC BAA-138 / DSM 3043 / CIP 106854 / NCIMB 13768 / 1H11)).